A 377-amino-acid chain; its full sequence is uncharacterized protein (377 aa).

Residues 309 to 375 (NIISVDKIKE…ISNLNKKLKK (67 aa)) adopt a coiled-coil conformation.

It belongs to the mimivirus L5 family.

This is an uncharacterized protein from Acanthamoeba polyphaga (Amoeba).